The following is a 266-amino-acid chain: Beta-lactamase OXA-10 (266 aa).

The N-terminal stretch at 1–19 (MKTFAAYVIIACLSSTALA) is a signal peptide. Cysteines 44 and 51 form a disulfide. Residue serine 67 is the Acyl-ester intermediate of the active site. Lysine 70 carries the N6-carboxylysine modification. Residues serine 115, threonine 206, phenylalanine 208, and arginine 250 each coordinate a beta-lactam.

Belongs to the class-D beta-lactamase family. Dimer.

The protein localises to the periplasm. The catalysed reaction is a beta-lactam + H2O = a substituted beta-amino acid. Its activity is regulated as follows. Activated, with respect to most beta-lactam substrates, in the presence of 0.05 M sodium bicarbonate. Its function is as follows. Class D beta-lactamase which confers resistance to the beta-lactam antibiotics, including penicillin, carbenicillin and oxacillin, and also some cephalosporins. Confers weak resistance to some carbapenems, in E.coli strain C600Z1. Acts via hydrolysis of the beta-lactam ring. Has penicillin- and cephalosporin-hydrolyzing activities. The sequence is that of Beta-lactamase OXA-10 from Pseudomonas aeruginosa.